Reading from the N-terminus, the 119-residue chain is Small ribosomal subunit protein bS6 (119 aa).

Residues 99 to 119 (KKEKKQSRKEEGSENSEKVEE) are disordered.

It belongs to the bacterial ribosomal protein bS6 family.

In terms of biological role, binds together with bS18 to 16S ribosomal RNA. The protein is Small ribosomal subunit protein bS6 of Thermosipho melanesiensis (strain DSM 12029 / CIP 104789 / BI429).